The following is a 205-amino-acid chain: Penta-EF hand domain-containing protein 2 (205 aa).

EF-hand domains are found at residues 45 to 75 (EMQSWFMRVDANRSGTISSGELQYLNIGGTP), 76 to 111 (LGIETATKLIKVFDHNKNGQIDFYEYAALHQFINNL), and 119 to 141 (DRNFSGTIDANEIYNALITSGFQ). Asp54, Asn56, Ser58, Thr60, Glu65, Asp89, Asn91, Asn93, Gln95, and Glu100 together coordinate Ca(2+).

The protein belongs to the Peflin/Sorcin family. In terms of assembly, in contrast to pefA, does not form homodimers in presence of Ca(2+). May form heterodimers with pefA.

The protein resides in the cytoplasm. The protein localises to the membrane. This is Penta-EF hand domain-containing protein 2 (pefB) from Dictyostelium discoideum (Social amoeba).